We begin with the raw amino-acid sequence, 201 residues long: Molybdenum cofactor guanylyltransferase (201 aa).

GTP contacts are provided by residues 14–16, lysine 31, and aspartate 104; that span reads LAG. A Mg(2+)-binding site is contributed by aspartate 104.

This sequence belongs to the MobA family. In terms of assembly, monomer. Mg(2+) is required as a cofactor.

It localises to the cytoplasm. It carries out the reaction Mo-molybdopterin + GTP + H(+) = Mo-molybdopterin guanine dinucleotide + diphosphate. Functionally, transfers a GMP moiety from GTP to Mo-molybdopterin (Mo-MPT) cofactor (Moco or molybdenum cofactor) to form Mo-molybdopterin guanine dinucleotide (Mo-MGD) cofactor. This is Molybdenum cofactor guanylyltransferase from Helicobacter pylori (strain ATCC 700392 / 26695) (Campylobacter pylori).